The primary structure comprises 225 residues: Flagellar transcriptional regulator FlhC (225 aa).

Residues cysteine 149, cysteine 152, cysteine 169, and cysteine 172 each contribute to the Zn(2+) site.

Belongs to the FlhC family. As to quaternary structure, heterohexamer composed of two FlhC and four FlhD subunits. Each FlhC binds a FlhD dimer, forming a heterotrimer, and a hexamer assembles by dimerization of two heterotrimers. Zn(2+) is required as a cofactor.

It localises to the cytoplasm. Its function is as follows. Functions in complex with FlhD as a master transcriptional regulator that regulates transcription of several flagellar and non-flagellar operons by binding to their promoter region. Activates expression of class 2 flagellar genes, including fliA, which is a flagellum-specific sigma factor that turns on the class 3 genes. Also regulates genes whose products function in a variety of physiological pathways. This chain is Flagellar transcriptional regulator FlhC, found in Burkholderia lata (strain ATCC 17760 / DSM 23089 / LMG 22485 / NCIMB 9086 / R18194 / 383).